A 363-amino-acid chain; its full sequence is Apelin receptor B (363 aa).

Over 1–38 (MESEGFSATTEQYEYYDYANETGLQPCDETDWDFSYSL) the chain is Extracellular. A glycan (N-linked (GlcNAc...) asparagine) is linked at Asn20. Disulfide bonds link Cys27/Cys287 and Cys109/Cys186. A helical membrane pass occupies residues 39-59 (LPVFYMIVFVLGLSGNGVVIF). Residues 60-77 (TVWKAKPKRRSADTYIGN) are Cytoplasmic-facing. The helical transmembrane segment at 78 to 98 (LALADLAFVVTLPLWATYTAL) threads the bilayer. Residues 99-111 (GFHWPFGSALCKL) lie on the Extracellular side of the membrane. The helical transmembrane segment at 112-132 (SSYLVLLNMFASVFCLTCLSF) threads the bilayer. Residues 133-152 (DRYLAIVHSLSSAKLRSRSS) are Cytoplasmic-facing. The helical transmembrane segment at 153–173 (ILVSLAVIWLFSGLLALPSLI) threads the bilayer. At 174 to 200 (LRDTRVEGNNTICDLDFSGVSSKENEN) the chain is on the extracellular side. Asn182 carries N-linked (GlcNAc...) asparagine glycosylation. The chain crosses the membrane as a helical span at residues 201-221 (FWIGGLSILTTVPGFLLPLLL). Residues 222–249 (MTIFYCFIGGKVTMHFQNLKKEEQKKKR) lie on the Cytoplasmic side of the membrane. Residues 250–270 (LLKIIITLVVVFAICWLPFHI) traverse the membrane as a helical segment. Topologically, residues 271–297 (LKTIHFLDLMGFLELSCSAQNIIVSLH) are extracellular. The helical transmembrane segment at 298–318 (PYATCLAYVNSCLNPFLYAFF) threads the bilayer. Over 319–363 (DLRFRSQCFFFFGFKKVLQGHLSNTSSSLSAQTQKSEIHSLATKV) the chain is Cytoplasmic.

This sequence belongs to the G-protein coupled receptor 1 family. Expressed in all blood vessels including the posterior cardinal vein, intersomitic veins and the vitelline vein network.

The protein resides in the cell membrane. Functionally, g protein-coupled receptor for peptide hormones apelin (apln) and apelin receptor early endogenous ligand (apela), that plays a role in the regulation of normal cardiovascular function and fluid homeostasis. When acting as apelin receptor, activates both G(i) protein pathway that inhibits adenylate cyclase activity, and the beta-arrestin pathway that promotes internalization of the receptor. Also functions as mechanoreceptor that is activated by pathological stimuli in a G-protein-independent fashion to induce beta-arrestin signaling, hence eliciting cardiac hypertrophy. However, the presence of apelin ligand blunts cardiac hypertrophic induction from APLNR/APJ on response to pathological stimuli. Plays a key role in early development such as gastrulation, blood vessels formation and heart morphogenesis by acting as a receptor for apela hormone, promoting endoderm and mesendoderm cell migration and regulating the migration of cells fated to become myocardial progenitors, respectively. Promotes angioblast migration toward the embryonic midline, i.e. the position of the future vessel formation, during vasculogenesis. May promote sinus venosus (SV)-derived endothelial cells migration into the developing heart to promote coronary blood vessel development. Required for cardiovascular development, particularly for intersomitic vein angiogenesis by acting as a receptor for apln hormone. Also plays a role in various processes in adults such as regulation of blood vessel formation, blood pressure, heart contractility, and heart failure. Acts upstream of the i/o type of G-alpha proteins in the differentiation of endothelium, erythroid cells, myeloid cells and cardiomyocytes. The chain is Apelin receptor B (aplnr-b) from Xenopus laevis (African clawed frog).